The sequence spans 338 residues: MSTLRLLISDSYDPWFNLAVEECIFRQMPATQRVLFLWRNADTVVIGRAQNPWKECNTRRMEEDNVRLARRSSGGGAVFHDLGNTCFTFMAGKPEYDKTISTSIVLNALNALGVSAEASGRNDLVVKTAEGDRKVSGSAYRETKDRGFHHGTLLLNSDLSRLANYLNPDKKKLAAKGITSVRSRVTNLTELLPGITHEQVCEAITEAFFAHYGERVEAEIISPDKTPDLPNFAETFARQSSWEWNFGQAPAFSHLLDERFTWGGVELHFDVEKGHITRAQVFTDSLNPAPLEALAGRLQGCLYRADMLQQECEALLVDFPEQEKELRELSAWIAGAVR.

Residues 29–216 (PATQRVLFLW…AFFAHYGERV (188 aa)) enclose the BPL/LPL catalytic domain. ATP contacts are provided by residues Arg-71, 76–79 (GAVF), and Lys-134. Lys-134 is a (R)-lipoate binding site.

This sequence belongs to the LplA family. In terms of assembly, monomer.

It is found in the cytoplasm. It catalyses the reaction L-lysyl-[lipoyl-carrier protein] + (R)-lipoate + ATP = N(6)-[(R)-lipoyl]-L-lysyl-[lipoyl-carrier protein] + AMP + diphosphate + H(+). Its pathway is protein modification; protein lipoylation via exogenous pathway; protein N(6)-(lipoyl)lysine from lipoate: step 1/2. The protein operates within protein modification; protein lipoylation via exogenous pathway; protein N(6)-(lipoyl)lysine from lipoate: step 2/2. Functionally, catalyzes both the ATP-dependent activation of exogenously supplied lipoate to lipoyl-AMP and the transfer of the activated lipoyl onto the lipoyl domains of lipoate-dependent enzymes. This chain is Lipoate-protein ligase A, found in Escherichia coli O1:K1 / APEC.